A 382-amino-acid polypeptide reads, in one-letter code: Innexin-8 (382 aa).

4 consecutive transmembrane segments (helical) span residues 29 to 49, 103 to 123, 187 to 207, and 270 to 290; these read LITA…TYVG, QWSS…KFLW, VIKI…AIFL, and IFLF…IAHF.

The protein belongs to the pannexin family.

It is found in the cell membrane. Its subcellular location is the cell junction. The protein resides in the gap junction. In terms of biological role, structural component of the gap junctions. The chain is Innexin-8 (inx-8) from Caenorhabditis elegans.